Here is a 343-residue protein sequence, read N- to C-terminus: N6-succino-2-amino-2'-deoxyadenylate synthase (343 aa).

Ser-14 acts as the Proton acceptor in catalysis. Residues Ser-14, Thr-15, Gly-16, Lys-17, and Gly-18 each coordinate ATP. Ser-14 serves as a coordination point for dGMP. A Mg(2+)-binding site is contributed by Ser-14. Residue Asn-40 coordinates dGMP. Residues Gly-42, His-43, and Thr-44 each contribute to the ATP site. Position 42 (Gly-42) interacts with Mg(2+). The dGMP site is built by Ser-127, Thr-128, and Arg-142. An ATP-binding site is contributed by Gln-187. Residue Thr-202 participates in dGMP binding. Thr-263 contributes to the Mg(2+) binding site. L-aspartate is bound by residues Thr-263, Val-264, and Arg-269. ATP contacts are provided by Asn-294, Asn-297, and Gly-330.

Belongs to the Caudovirales PurZ family. Mg(2+) serves as cofactor.

It carries out the reaction dGMP + L-aspartate + ATP = (2S)-2-amino-2'-deoxyadenylo-succinate + ADP + phosphate + 2 H(+). The protein operates within purine metabolism. Involved in the synthesis of the atypical nucleotide dZTP (2-amino-2'-deoxyadenosine-5'-triphosphate). Catalyzes the condensation of aspartate with deoxyguanylate into dSMP (N6-succino-2-amino-2'-deoxyadenylate), which undergoes defumarylation and phosphorylation respectively by host PurB and guanylate/nucleoside diphosphate kinases to give dZTP. dZTP is integrated into the viral genome instead of adenine by the viral DNA polymerase. This Z-base probably completely replaces adenosine and forms a triple bond to the opposite T-base. The resulting non-standard viral DNA is called Z-genome. The chemically modified DNA is probably harder for the host bacteria to digest with nucleases or restriction enzymes. This chain is N6-succino-2-amino-2'-deoxyadenylate synthase, found in Vibrio phage phiVC8.